Here is a 177-residue protein sequence, read N- to C-terminus: Transcriptional regulator MET31 (177 aa).

The C2H2-type zinc-finger motif lies at tyrosine 95–histidine 117.

In terms of assembly, interacts with MET4 and MET28.

It is found in the cytoplasm. It localises to the nucleus. Functionally, auxiliary transcriptional regulator of sulfur amino acid metabolism. Involved in the transcriptional activation of MET28. This Saccharomyces cerevisiae (strain ATCC 204508 / S288c) (Baker's yeast) protein is Transcriptional regulator MET31 (MET31).